We begin with the raw amino-acid sequence, 348 residues long: Phenylalanine--tRNA ligase alpha subunit (348 aa).

E259 contacts Mg(2+).

The protein belongs to the class-II aminoacyl-tRNA synthetase family. Phe-tRNA synthetase alpha subunit type 1 subfamily. In terms of assembly, tetramer of two alpha and two beta subunits. Mg(2+) serves as cofactor.

The protein localises to the cytoplasm. The enzyme catalyses tRNA(Phe) + L-phenylalanine + ATP = L-phenylalanyl-tRNA(Phe) + AMP + diphosphate + H(+). The sequence is that of Phenylalanine--tRNA ligase alpha subunit from Lactiplantibacillus plantarum (strain ATCC BAA-793 / NCIMB 8826 / WCFS1) (Lactobacillus plantarum).